A 280-amino-acid chain; its full sequence is Putative pyruvate, phosphate dikinase regulatory protein (280 aa).

G153–T160 is an ADP binding site.

This sequence belongs to the pyruvate, phosphate/water dikinase regulatory protein family. PDRP subfamily.

The catalysed reaction is N(tele)-phospho-L-histidyl/L-threonyl-[pyruvate, phosphate dikinase] + ADP = N(tele)-phospho-L-histidyl/O-phospho-L-threonyl-[pyruvate, phosphate dikinase] + AMP + H(+). It catalyses the reaction N(tele)-phospho-L-histidyl/O-phospho-L-threonyl-[pyruvate, phosphate dikinase] + phosphate + H(+) = N(tele)-phospho-L-histidyl/L-threonyl-[pyruvate, phosphate dikinase] + diphosphate. In terms of biological role, bifunctional serine/threonine kinase and phosphorylase involved in the regulation of the pyruvate, phosphate dikinase (PPDK) by catalyzing its phosphorylation/dephosphorylation. The polypeptide is Putative pyruvate, phosphate dikinase regulatory protein (Bartonella quintana (strain Toulouse) (Rochalimaea quintana)).